A 213-amino-acid chain; its full sequence is Putative manganese efflux pump MntP (213 aa).

6 consecutive transmembrane segments (helical) span residues 3–23 (ILSI…VSVA), 36–56 (ALKV…IGWG), 67–87 (AFDH…MIFE), 130–150 (LAIA…FLGI), 152–172 (IVQT…LGVI), and 187–207 (IVGG…HTGI).

Belongs to the MntP (TC 9.B.29) family.

It localises to the cell membrane. Its function is as follows. Probably functions as a manganese efflux pump. The chain is Putative manganese efflux pump MntP from Clostridium perfringens (strain ATCC 13124 / DSM 756 / JCM 1290 / NCIMB 6125 / NCTC 8237 / Type A).